A 79-amino-acid polypeptide reads, in one-letter code: UPF0349 protein BCE33L4669 (79 aa).

It belongs to the UPF0349 family.

This Bacillus cereus (strain ZK / E33L) protein is UPF0349 protein BCE33L4669.